A 137-amino-acid chain; its full sequence is Phosphoribosyl-AMP cyclohydrolase (137 aa).

Position 84 (Asp-84) interacts with Mg(2+). Residue Cys-85 participates in Zn(2+) binding. The Mg(2+) site is built by Asp-86 and Asp-88. Residues Cys-101 and Cys-108 each coordinate Zn(2+).

The protein belongs to the PRA-CH family. As to quaternary structure, homodimer. Requires Mg(2+) as cofactor. Zn(2+) is required as a cofactor.

The protein resides in the cytoplasm. The enzyme catalyses 1-(5-phospho-beta-D-ribosyl)-5'-AMP + H2O = 1-(5-phospho-beta-D-ribosyl)-5-[(5-phospho-beta-D-ribosylamino)methylideneamino]imidazole-4-carboxamide. Its pathway is amino-acid biosynthesis; L-histidine biosynthesis; L-histidine from 5-phospho-alpha-D-ribose 1-diphosphate: step 3/9. Its function is as follows. Catalyzes the hydrolysis of the adenine ring of phosphoribosyl-AMP. This is Phosphoribosyl-AMP cyclohydrolase from Chlorobaculum parvum (strain DSM 263 / NCIMB 8327) (Chlorobium vibrioforme subsp. thiosulfatophilum).